The primary structure comprises 715 residues: Probable ubiquitin thioesterase DG1039 (715 aa).

The stretch at 86–302 (KSRNEIKRKA…NNQTDDKLDN (217 aa)) forms a coiled coil. Residues 287-302 (NKKLENNNQTDDKLDN) show a composition bias toward basic and acidic residues. 3 disordered regions span residues 287 to 367 (NKKL…YNST), 398 to 450 (QYKQ…QQQY), and 502 to 527 (LAQS…SSEA). Polar residues predominate over residues 339-349 (TTAQLPLSITQ). Over residues 398 to 409 (QYKQQQQQQPIQ) the composition is skewed to low complexity. Polar residues-rich tracts occupy residues 410 to 427 (SPTN…NNYN) and 502 to 525 (LAQS…IDSS). Positions 537–666 (IIVHGEVFQE…IFRLTDPPGL (130 aa)) constitute an MPN domain. Zn(2+)-binding residues include His-615, His-617, Asp-628, His-630, Cys-672, His-678, and His-680. The JAMM motif motif lies at 615-628 (HTHPTQDCFLSAVD).

Belongs to the peptidase M67C family. Zn(2+) serves as cofactor.

Its function is as follows. May be a zinc metalloprotease that specifically cleaves ubiquitin chains. The chain is Probable ubiquitin thioesterase DG1039 (DG1039) from Dictyostelium discoideum (Social amoeba).